Here is a 358-residue protein sequence, read N- to C-terminus: Methylthioribose-1-phosphate isomerase (358 aa).

Residues 54–56 (RGA), Arg-96, and Gln-205 each bind substrate. Asp-246 (proton donor) is an active-site residue. Residue 256-257 (NK) coordinates substrate.

The protein belongs to the eIF-2B alpha/beta/delta subunits family. MtnA subfamily.

It catalyses the reaction 5-(methylsulfanyl)-alpha-D-ribose 1-phosphate = 5-(methylsulfanyl)-D-ribulose 1-phosphate. It functions in the pathway amino-acid biosynthesis; L-methionine biosynthesis via salvage pathway; L-methionine from S-methyl-5-thio-alpha-D-ribose 1-phosphate: step 1/6. Functionally, catalyzes the interconversion of methylthioribose-1-phosphate (MTR-1-P) into methylthioribulose-1-phosphate (MTRu-1-P). In Pseudomonas syringae pv. tomato (strain ATCC BAA-871 / DC3000), this protein is Methylthioribose-1-phosphate isomerase.